Consider the following 533-residue polypeptide: Calcium-dependent protein kinase 8 (533 aa).

The interval Met-1–Ile-21 is disordered. The N-myristoyl glycine moiety is linked to residue Gly-2. The region spanning Tyr-57 to Ile-315 is the Protein kinase domain. Residues Val-63–Thr-71 and Lys-86 contribute to the ATP site. Asp-181 (proton acceptor) is an active-site residue. Ser-221 is subject to Phosphoserine. The tract at residues Ala-321–Ile-351 is autoinhibitory domain. 4 EF-hand domains span residues Glu-358–Gln-394, Ile-395–Met-430, Ala-431–Thr-466, and Asn-467–Trp-502. Positions 371, 375, 377, 382, 408, 410, 412, 414, 419, 444, 446, 448, 450, 455, 480, 482, 484, and 486 each coordinate Ca(2+). Ser-488 bears the Phosphoserine mark. Glu-491 contacts Ca(2+). Residue Ser-526 is modified to Phosphoserine.

This sequence belongs to the protein kinase superfamily. Ser/Thr protein kinase family. CDPK subfamily.

It localises to the cell membrane. It catalyses the reaction L-seryl-[protein] + ATP = O-phospho-L-seryl-[protein] + ADP + H(+). The enzyme catalyses L-threonyl-[protein] + ATP = O-phospho-L-threonyl-[protein] + ADP + H(+). Activated by calcium. Autophosphorylation may play an important role in the regulation of the kinase activity. Functionally, may play a role in signal transduction pathways that involve calcium as a second messenger. The sequence is that of Calcium-dependent protein kinase 8 (CPK8) from Arabidopsis thaliana (Mouse-ear cress).